The sequence spans 356 residues: UDP-N-acetylglucosamine--N-acetylmuramyl-(pentapeptide) pyrophosphoryl-undecaprenol N-acetylglucosamine transferase (356 aa).

UDP-N-acetyl-alpha-D-glucosamine contacts are provided by residues 15–17 (TGG), N127, R163, S191, I244, 263–268 (ALTVSE), and Q288.

The protein belongs to the glycosyltransferase 28 family. MurG subfamily.

The protein resides in the cell inner membrane. The catalysed reaction is di-trans,octa-cis-undecaprenyl diphospho-N-acetyl-alpha-D-muramoyl-L-alanyl-D-glutamyl-meso-2,6-diaminopimeloyl-D-alanyl-D-alanine + UDP-N-acetyl-alpha-D-glucosamine = di-trans,octa-cis-undecaprenyl diphospho-[N-acetyl-alpha-D-glucosaminyl-(1-&gt;4)]-N-acetyl-alpha-D-muramoyl-L-alanyl-D-glutamyl-meso-2,6-diaminopimeloyl-D-alanyl-D-alanine + UDP + H(+). Its pathway is cell wall biogenesis; peptidoglycan biosynthesis. Its function is as follows. Cell wall formation. Catalyzes the transfer of a GlcNAc subunit on undecaprenyl-pyrophosphoryl-MurNAc-pentapeptide (lipid intermediate I) to form undecaprenyl-pyrophosphoryl-MurNAc-(pentapeptide)GlcNAc (lipid intermediate II). The chain is UDP-N-acetylglucosamine--N-acetylmuramyl-(pentapeptide) pyrophosphoryl-undecaprenol N-acetylglucosamine transferase from Yersinia pestis bv. Antiqua (strain Antiqua).